Reading from the N-terminus, the 375-residue chain is Dihydroorotate dehydrogenase (quinone) (375 aa).

FMN contacts are provided by residues 78-82 (AGLDK) and threonine 102. Lysine 82 contacts substrate. 127-131 (NRMGF) lines the substrate pocket. FMN-binding residues include asparagine 159 and asparagine 192. Asparagine 192 contributes to the substrate binding site. Residue serine 195 is the Nucleophile of the active site. Asparagine 197 contributes to the substrate binding site. Residues lysine 230 and threonine 258 each coordinate FMN. 259–260 (NT) contributes to the substrate binding site. Residues glycine 288, glycine 317, and 338–339 (YT) each bind FMN.

Belongs to the dihydroorotate dehydrogenase family. Type 2 subfamily. Monomer. The cofactor is FMN.

Its subcellular location is the cell membrane. The enzyme catalyses (S)-dihydroorotate + a quinone = orotate + a quinol. The protein operates within pyrimidine metabolism; UMP biosynthesis via de novo pathway; orotate from (S)-dihydroorotate (quinone route): step 1/1. Its function is as follows. Catalyzes the conversion of dihydroorotate to orotate with quinone as electron acceptor. The polypeptide is Dihydroorotate dehydrogenase (quinone) (Cyanothece sp. (strain PCC 7425 / ATCC 29141)).